The chain runs to 648 residues: RAF proto-oncogene serine/threonine-protein kinase (648 aa).

The residue at position 29 (S29) is a Phosphoserine; by MAPK1. The residue at position 43 (S43) is a Phosphoserine; by PKA and MAPK1. The RBD domain maps to 56 to 131; it reads NTIRVFLPNK…IGEELQVDFL (76 aa). Residues 138–184 form a Phorbol-ester/DAG-type zinc finger; sequence THNFARKTFLKLAFCDICQKFLLNGFRCQTCGYKFHEHCSTKVPTMC. Residues H139, C152, C155, C165, C168, H173, C176, and C184 each coordinate Zn(2+). A disordered region spans residues 220-334; the sequence is SVSRMPVSSQ…QEKNKIRPRG (115 aa). The segment covering 239–271 has biased composition (polar residues); sequence TFNTSSPSSEGSLSQRQRSTSTPNVHMVSTTLP. The residue at position 252 (S252) is a Phosphoserine. S259 is subject to Phosphoserine; by PKA, PKC and PKB/AKT1. Phosphothreonine; by autocatalysis is present on T268. Residue T269 is modified to Phosphothreonine; by PKA. Over residues 275–285 the composition is skewed to basic and acidic residues; the sequence is RMIEDAIRSHS. The segment covering 286 to 301 has biased composition (low complexity); that stretch reads ESASPSALSSSPNNLS. Phosphoserine; by MAPK1 is present on S289. The residue at position 296 (S296) is a Phosphoserine. S301 is subject to Phosphoserine; by MAPK1. Residues 331 to 349 are interaction with PEBP1/RKIP; that stretch reads RPRGQRDSSYYWEIEASEV. S338 bears the Phosphoserine; by PAK1, PAK2, PAK3 and PAK5 mark. At S339 the chain carries Phosphoserine; by PAK1, PAK2 and PAK3. Phosphotyrosine; by SRC occurs at positions 340 and 341. The Protein kinase domain occupies 349-609; it reads VMLSTRIGSG…PQILSSIELL (261 aa). Residues 355 to 363 and K375 contribute to the ATP site; that span reads IGSGSFGTV. Catalysis depends on D468, which acts as the Proton acceptor. Position 471 is a phosphoserine (S471). Phosphothreonine is present on T491. Position 494 is a phosphoserine (S494). The residue at position 499 (S499) is a Phosphoserine; by PKC. R563 is subject to Symmetric dimethylarginine; by PRMT5. S621 is subject to Phosphoserine. Phosphoserine; by MAPK1 is present on S642.

It belongs to the protein kinase superfamily. TKL Ser/Thr protein kinase family. RAF subfamily. In terms of assembly, monomer. Homodimer. Heterodimerizes with BRAF and this heterodimer possesses a highly increased kinase activity compared to the respective homodimers or monomers. Heterodimerization is mitogen-regulated and enhanced by 14-3-3 proteins. MAPK1/ERK2 activation can induce a negative feedback that promotes the dissociation of the heterodimer. Forms a multiprotein complex with Ras (M-Ras/MRAS), SHOC2 and protein phosphatase 1 (PPP1CA, PPP1CB and PPP1CC). Interacts with LZTR1. Interacts with Ras proteins; the interaction is antagonized by RIN1. Weakly interacts with RIT1. Interacts (via N-terminus) with RGS14 (via RBD domains); the interaction mediates the formation of a ternary complex with BRAF, a ternary complex inhibited by GNAI1. Probably forms a complex composed of chaperones HSP90 and HSP70, co-chaperones CDC37, PPP5C, TSC1 and client protein TSC2, CDK4, AKT, RAF1 and NR3C1; this complex does not contain co-chaperones STIP1/HOP and PTGES3/p23. Interacts with STK3/MST2; the interaction inhibits its pro-apoptotic activity. Interacts (when phosphorylated at Ser-259) with YWHAZ (unphosphorylated at 'Thr-232'). Interacts with MAP2K1/MEK1 and MAP2K2/MEK2. Interacts with MAP3K5/ASF1 (via N-terminus) and this interaction inhibits the proapoptotic function of MAP3K5/ASK1. Interacts with PAK1 (via kinase domain). The phosphorylated form interacts with PIN1. The Ser-338 and Ser-339 phosphorylated form (by PAK1) interacts with BCL2. Interacts with PEBP1/RKIP and this interaction is enhanced if RAF1 is phosphorylated on residues Ser-338, Ser-339, Tyr-340 and Tyr-341. Interacts with ADCY2, ADCY5, ADCY6, DGKH, RCAN1/DSCR1, PPP1R12A, PKB/AKT1, PPP2CA, PPP2R1B, SPRY2, SPRY4, CNKSR1/CNK1, KSR2 and PHB/prohibitin. Interacts with ROCK2. In its active form, interacts with PRMT5. Interacts with FAM83B; displaces 14-3-3 proteins from RAF1 and activates RAF1. Interacts with PDE8A; the interaction promotes RAF1 activity. Interacts with MFHAS1. Interacts with GLS. Interacts with NEK10 and MAP2K1; the interaction is direct with NEK10 and required for ERK1/2-signaling pathway activation in response to UV irradiation. Requires Zn(2+) as cofactor. Post-translationally, phosphorylation at Thr-269, Ser-338, Tyr-341, Thr-491 and Ser-494 results in its activation. Phosphorylation at Ser-29, Ser-43, Ser-289, Ser-296, Ser-301 and Ser-642 by MAPK1/ERK2 results in its inactivation. Phosphorylation at Ser-259 induces the interaction with YWHAZ and inactivates kinase activity. Dephosphorylation of Ser-259 by the SHOC2-MRAS-PP1c (SMP) complex consisting of SHOC2, GTP-bound M-Ras/MRAS and the catalytic subunit of protein phosphatase 1 (PPP1CA, PPP1CB or PPP1CC); this relieves inactivation and stimulates kinase activity. Phosphorylation at Ser-338 by PAK1 and PAK5 and Ser-339 by PAK1 is required for its mitochondrial localization. Phosphorylation at Ser-621 in response to growth factor treatment stabilizes the protein, possibly by preventing proteasomal degradation. Phosphorylation at Ser-289, Ser-296, Ser-301, Ser-338 and Ser-621 are somehow linked to the methylation potential of cells. Treatment of cells with HGF in the presence of the methylation inhibitor 5'-methylthioadenosine (MTA) results in increased phosphorylation at Ser-338 and Ser-621 and decreased phosphorylation at Ser-296, Ser-301 and Ser-338. Dephosphorylation at Ser-338 by PPP5C results in an activity decrease. Methylated at Arg-563 in response to EGF treatment. This modification leads to destabilization of the protein, possibly through proteasomal degradation. In terms of tissue distribution, in skeletal muscle, isoform 1 is more abundant than isoform 2.

The protein localises to the cytoplasm. It localises to the cell membrane. Its subcellular location is the mitochondrion. It is found in the nucleus. The catalysed reaction is L-seryl-[protein] + ATP = O-phospho-L-seryl-[protein] + ADP + H(+). It catalyses the reaction L-threonyl-[protein] + ATP = O-phospho-L-threonyl-[protein] + ADP + H(+). With respect to regulation, regulation is a highly complex process involving membrane recruitment, protein-protein interactions, dimerization, and phosphorylation/dephosphorylation events. Ras-GTP recruits RAF1 to the membrane, thereby promoting its activation. The inactive conformation of RAF1 is maintained by autoinhibitory interactions occurring between the N-terminal regulatory and the C-terminal catalytic domains and by the binding of a 14-3-3 protein that contacts two phosphorylation sites, Ser-259 and Ser-621. Upon mitogenic stimulation, Ras and PPP2R1A cooperate to release autoinhibition and the subsequent phosphorylation of activating sites: Ser-338, Tyr-341, Thr-491, and Ser-494, yields a fully active kinase. Through a negative feedback mechanism involving MAPK1/ERK2, RAF1 is phosphorylated on Ser-29, Ser-43, Ser-289, Ser-296, Ser-301 and Ser-642 by MAPK1/ERK2, which yields an inactive, desensitized kinase. The signaling-competent conformation of RAF1 is finally re-established by the coordinated action of PIN1, a prolyl isomerase that converts pSer and pThr residues from the cis to the trans conformation, which is preferentially recognized and dephosphorylated by PPP2R1A. Activated by homodimerization and heterodimerization (with BRAF). Also regulated through association with other proteins such as KSR2, CNKSR1/CNK1, PEBP1/RKIP, PHB/prohibitin and SPRY4. PEBP1/RKIP acts by dissociating RAF1 from its substrates MAP2K1/MEK1 and MAP2K2/MEK2. PHB/prohibitin facilitates the displacement of 14-3-3 from RAF1 by activated Ras, thereby promoting cell membrane localization and phosphorylation of RAF1 at the activating Ser-338. SPRY4 inhibits Ras-independent, but not Ras-dependent, activation of RAF1. CNKSR1/CNK1 regulates Src-mediated RAF1 activation. Its function is as follows. Serine/threonine-protein kinase that acts as a regulatory link between the membrane-associated Ras GTPases and the MAPK/ERK cascade, and this critical regulatory link functions as a switch determining cell fate decisions including proliferation, differentiation, apoptosis, survival and oncogenic transformation. RAF1 activation initiates a mitogen-activated protein kinase (MAPK) cascade that comprises a sequential phosphorylation of the dual-specific MAPK kinases (MAP2K1/MEK1 and MAP2K2/MEK2) and the extracellular signal-regulated kinases (MAPK3/ERK1 and MAPK1/ERK2). The phosphorylated form of RAF1 (on residues Ser-338 and Ser-339, by PAK1) phosphorylates BAD/Bcl2-antagonist of cell death at 'Ser-75'. Phosphorylates adenylyl cyclases: ADCY2, ADCY5 and ADCY6, resulting in their activation. Phosphorylates PPP1R12A resulting in inhibition of the phosphatase activity. Phosphorylates TNNT2/cardiac muscle troponin T. Can promote NF-kB activation and inhibit signal transducers involved in motility (ROCK2), apoptosis (MAP3K5/ASK1 and STK3/MST2), proliferation and angiogenesis (RB1). Can protect cells from apoptosis also by translocating to the mitochondria where it binds BCL2 and displaces BAD/Bcl2-antagonist of cell death. Regulates Rho signaling and migration, and is required for normal wound healing. Plays a role in the oncogenic transformation of epithelial cells via repression of the TJ protein, occludin (OCLN) by inducing the up-regulation of a transcriptional repressor SNAI2/SLUG, which induces down-regulation of OCLN. Restricts caspase activation in response to selected stimuli, notably Fas stimulation, pathogen-mediated macrophage apoptosis, and erythroid differentiation. This Homo sapiens (Human) protein is RAF proto-oncogene serine/threonine-protein kinase.